A 368-amino-acid polypeptide reads, in one-letter code: H-2 class I histocompatibility antigen, D-P alpha chain (368 aa).

Residues 1–21 (MAPRTLLLLLAAALAPTQTRA) form the signal peptide. The segment at 22 to 111 (GPHSLRYFVT…LLGYYNQSKG (90 aa)) is alpha-1. Residues 22 to 303 (GPHSLRYFVT…RWEPPPSTDS (282 aa)) lie on the Extracellular side of the membrane. Asn107 is a glycosylation site (N-linked (GlcNAc...) asparagine). An alpha-2 region spans residues 112 to 203 (GSHTIQGMRG…ELGNATLLCT (92 aa)). Cys122 and Cys185 are joined by a disulfide. N-linked (GlcNAc...) asparagine glycosylation is found at Asn197 and Asn277. An alpha-3 region spans residues 204 to 295 (DPPKAHVTHH…GLPEPLTLRW (92 aa)). The Ig-like C1-type domain occupies 206–294 (PKAHVTHHPR…EGLPEPLTLR (89 aa)). A disulfide bridge links Cys224 with Cys280. A connecting peptide region spans residues 296 to 303 (EPPPSTDS). The helical transmembrane segment at 304–330 (YMVIVAVLVVLGAVFIIGAVVAFVMMM) threads the bilayer. Residues 331–368 (RRNTGGKGGDYTLAPGSQSSEMSLRDCKVMVHDSHSLA) lie on the Cytoplasmic side of the membrane. Ser350 and Ser353 each carry phosphoserine.

Belongs to the MHC class I family. As to quaternary structure, heterodimer of an alpha chain and a beta chain (beta-2-microglobulin).

It localises to the membrane. Involved in the presentation of foreign antigens to the immune system. This is H-2 class I histocompatibility antigen, D-P alpha chain (H2-D1) from Mus musculus (Mouse).